Here is a 1214-residue protein sequence, read N- to C-terminus: Ubiquitin carboxyl-terminal hydrolase 36 (1214 aa).

The interval 124-169 (AVGSNGHDNNTVNGGTVNGNRKQTVDSGQSNQNSSANPNELPKPKR) is disordered. Residues 132 to 143 (NNTVNGGTVNGN) show a composition bias toward low complexity. The segment covering 144 to 161 (RKQTVDSGQSNQNSSANP) has biased composition (polar residues). In terms of domain architecture, USP spans 192–502 (AGMLNVGNTC…NAYIMFYELD (311 aa)). Catalysis depends on Cys201, which acts as the Nucleophile. His461 functions as the Proton acceptor in the catalytic mechanism. The span at 509 to 523 (SSTINNNSSSSSNNS) shows a compositional bias: low complexity. The interval 509–532 (SSTINNNSSSSSNNSVAPKLNGLR) is disordered. 2 positions are modified to phosphoserine: Ser553 and Ser555. 5 disordered regions span residues 631 to 819 (GEAA…KQKT), 836 to 964 (HRIA…ASKS), 977 to 1001 (QKLLNGSAKSAATTRPGNGYQSESV), 1048 to 1161 (HGDT…PNFQ), and 1176 to 1214 (KFQQQRALQRHLAAGGGFTRRQQQSTGQQQQQQQQQQQS). Over residues 633-651 (AAPNANTNANANKSSCNNN) the composition is skewed to low complexity. Over residues 666–685 (SDEDEDEDDSDDDDDDDDDD) the composition is skewed to acidic residues. Thr717 is modified (phosphothreonine). A phosphoserine mark is found at Ser727 and Ser729. 2 stretches are compositionally biased toward low complexity: residues 735–751 (QQQQQQQQQLLQTPQQL) and 785–816 (KTNGSVSNTSNSSHSKAKSASNASSANVNSSK). Residues 856–868 (EQVQTEQGTKKLN) are compositionally biased toward polar residues. Residues 869-878 (SASSASASKS) are compositionally biased toward low complexity. Ser891 is modified (phosphoserine). Residue Thr894 is modified to Phosphothreonine. A Phosphoserine modification is found at Ser897. The segment covering 915-942 (DDDDEEDEEEDDVEADADQEDDDDEVVV) has biased composition (acidic residues). A Phosphothreonine modification is found at Thr951. Over residues 983-1001 (SAKSAATTRPGNGYQSESV) the composition is skewed to polar residues. Low complexity predominate over residues 1058–1076 (NSSSNNSSNINSNSNSNSN). Residues 1089–1098 (EAREQRKRDA) are compositionally biased toward basic and acidic residues. Low complexity-rich tracts occupy residues 1178-1188 (QQQRALQRHLA) and 1197-1214 (QQQSTGQQQQQQQQQQQS).

This sequence belongs to the peptidase C19 family. Interacts with atms/PAF1, but not with CycT.

Its subcellular location is the nucleus. It localises to the nucleolus. It catalyses the reaction Thiol-dependent hydrolysis of ester, thioester, amide, peptide and isopeptide bonds formed by the C-terminal Gly of ubiquitin (a 76-residue protein attached to proteins as an intracellular targeting signal).. Functionally, required for maintaining multiple types of adult stem cells, including male and female germline, epithelial follicle cell and intestinal stem cells. May function as a transcriptional repressor by continually deubiquiting histone H2B at the promoters of genes critical for cellular differentiation, thereby preventing histone H3 'Lys-4' trimethylation (H3K4). Controls selective autophagy activation by ubiquitinated proteins. The chain is Ubiquitin carboxyl-terminal hydrolase 36 (Usp36) from Drosophila virilis (Fruit fly).